A 359-amino-acid chain; its full sequence is Dihydroorotate dehydrogenase (quinone) (359 aa).

FMN-binding positions include 68–72 and T92; that span reads AGFDK. K72 contributes to the substrate binding site. 117-121 contributes to the substrate binding site; that stretch reads NRMGF. FMN contacts are provided by N145 and N176. N176 is a substrate binding site. Residue S179 is the Nucleophile of the active site. N181 is a substrate binding site. FMN contacts are provided by K212 and T240. Substrate is bound at residue 241–242; it reads NT. FMN is bound by residues G266, G295, and 316 to 317; that span reads YT.

The protein belongs to the dihydroorotate dehydrogenase family. Type 2 subfamily. Monomer. It depends on FMN as a cofactor.

Its subcellular location is the cell membrane. The enzyme catalyses (S)-dihydroorotate + a quinone = orotate + a quinol. Its pathway is pyrimidine metabolism; UMP biosynthesis via de novo pathway; orotate from (S)-dihydroorotate (quinone route): step 1/1. Catalyzes the conversion of dihydroorotate to orotate with quinone as electron acceptor. This chain is Dihydroorotate dehydrogenase (quinone), found in Corynebacterium striatum.